We begin with the raw amino-acid sequence, 622 residues long: MNGNHKQALSGVTLAAIGVVYGDIGTSPLYTLRECLSGQFGFGVEPASILGFLSLIFWLLILVVSVKYLSFVMRADNAGEGGILTLMSLATRNTPAKWTPLLIILGLIGGSFFYGEVVITPAMSVMSAIEGLNIAAPSLDPYIVPLSVLVLTLLFAIQKHGTATVGKLFAPIMLTWFITLAVLGLNSIFQHPEVLGALNPVWALRFFAKYQTASFFALGAVVLAITGVEALYADMGHFGKSPIRRAWFMVVLPSLVLNYFGQGALLLAHPEAITNPFFLLAPKWALLPLLLLATLATVIASQAVISGVFSLTRQAVRLGYLSPIRIVHTSEQESGQIYIPVINWMLYISVVIVIMSFEHSSNLAAAYGIAVTGTMVLTSILSCSVARHSWHWNKYLVAALFVALLAIDVPLFAANLAKIFSGGWLPLTLGAVMFTVMTSWKSERFQLIRRLNEHGNSLEPMIASLEKSPPTRVAGTAVYMSRVVNVIPHALLHNLKHNKVLHERIILLTLRVEEVPYVHNVRRVCIEQLSPTFWRVVASYGWRETPNVEEIFHRCNAEGLSCRMMETSFFMAHESLIMKERPWYLYLRGKLFMLLQRNALRAPDQFEIPPNRVIELGSQVDI.

The next 12 membrane-spanning stretches (helical) occupy residues 9 to 29, 46 to 66, 99 to 119, 137 to 157, 169 to 189, 213 to 233, 247 to 267, 285 to 305, 337 to 357, 363 to 383, 396 to 416, and 419 to 439; these read LSGV…TSPL, PASI…VVSV, TPLL…EVVI, PSLD…LFAI, FAPI…NSIF, ASFF…ALYA, WFMV…ALLL, ALLP…QAVI, IYIP…IMSF, LAAA…ILSC, LVAA…AANL, and IFSG…VMTS.

Belongs to the HAK/KUP transporter (TC 2.A.72) family.

It is found in the cell inner membrane. The catalysed reaction is K(+)(in) + H(+)(in) = K(+)(out) + H(+)(out). In terms of biological role, transport of potassium into the cell. Likely operates as a K(+):H(+) symporter. The chain is Probable potassium transport system protein Kup 2 from Aeromonas hydrophila subsp. hydrophila (strain ATCC 7966 / DSM 30187 / BCRC 13018 / CCUG 14551 / JCM 1027 / KCTC 2358 / NCIMB 9240 / NCTC 8049).